The following is a 443-amino-acid chain: ATP-dependent protease ATPase subunit HslU (443 aa).

Residues isoleucine 20, 62–67 (GVGKTE), aspartate 255, glutamate 321, and arginine 393 contribute to the ATP site.

This sequence belongs to the ClpX chaperone family. HslU subfamily. A double ring-shaped homohexamer of HslV is capped on each side by a ring-shaped HslU homohexamer. The assembly of the HslU/HslV complex is dependent on binding of ATP.

The protein resides in the cytoplasm. ATPase subunit of a proteasome-like degradation complex; this subunit has chaperone activity. The binding of ATP and its subsequent hydrolysis by HslU are essential for unfolding of protein substrates subsequently hydrolyzed by HslV. HslU recognizes the N-terminal part of its protein substrates and unfolds these before they are guided to HslV for hydrolysis. This is ATP-dependent protease ATPase subunit HslU from Helicobacter pylori (strain HPAG1).